Consider the following 609-residue polypeptide: DNA mismatch repair protein MutL (609 aa).

This sequence belongs to the DNA mismatch repair MutL/HexB family.

In terms of biological role, this protein is involved in the repair of mismatches in DNA. It is required for dam-dependent methyl-directed DNA mismatch repair. May act as a 'molecular matchmaker', a protein that promotes the formation of a stable complex between two or more DNA-binding proteins in an ATP-dependent manner without itself being part of a final effector complex. This Rickettsia felis (strain ATCC VR-1525 / URRWXCal2) (Rickettsia azadi) protein is DNA mismatch repair protein MutL.